The following is a 116-amino-acid chain: Ribosome-binding factor A (116 aa).

It belongs to the RbfA family. As to quaternary structure, monomer. Binds 30S ribosomal subunits, but not 50S ribosomal subunits or 70S ribosomes.

It localises to the cytoplasm. One of several proteins that assist in the late maturation steps of the functional core of the 30S ribosomal subunit. Associates with free 30S ribosomal subunits (but not with 30S subunits that are part of 70S ribosomes or polysomes). Required for efficient processing of 16S rRNA. May interact with the 5'-terminal helix region of 16S rRNA. This Staphylococcus aureus (strain JH9) protein is Ribosome-binding factor A.